The primary structure comprises 131 residues: Large ribosomal subunit protein bL17 (131 aa).

It belongs to the bacterial ribosomal protein bL17 family. Part of the 50S ribosomal subunit. Contacts protein L32.

This chain is Large ribosomal subunit protein bL17, found in Chromobacterium violaceum (strain ATCC 12472 / DSM 30191 / JCM 1249 / CCUG 213 / NBRC 12614 / NCIMB 9131 / NCTC 9757 / MK).